The sequence spans 1717 residues: PH domain leucine-rich repeat-containing protein phosphatase 1 (1717 aa).

Methionine 1 bears the N-acetylmethionine mark. Disordered stretches follow at residues 1 to 25, 41 to 118, 136 to 156, and 252 to 470; these read MEPA…SAPA, LAAA…GANS, AASS…GAAG, and PGAA…PPPT. Residues 98 to 110 show a composition bias toward low complexity; it reads APQPIAGGAAPVP. Over residues 262 to 274 the composition is skewed to pro residues; it reads EPPPEAGPRLAPP. Composition is skewed to low complexity over residues 313–325 and 333–345; these read SRRA…DSSP and PVSS…PVVS. At serine 317 the chain carries Phosphoserine. Composition is skewed to polar residues over residues 346–358 and 408–417; these read DTES…SAES and QTASSPQPQQ. Serine 412 is subject to Phosphoserine. In terms of domain architecture, PH spans 536–636; that stretch reads RIQLSGMYNV…WLRQVSKVAS (101 aa). LRR repeat units lie at residues 638–659, 661–682, 692–712, 715–736, 738–760, 761–783, 784–804, 808–831, 832–853, 873–894, 895–916, 918–939, 941–962, 963–984, 987–1008, 1013–1033, 1037–1058, 1061–1082, 1084–1105, 1106–1127, and 1129–1150; these read RISS…LFYS, DLTH…PAAR, KLKS…AVCS, TLAE…VGVM, NLQT…ENMK, QLSY…EKLT, AVDK…QALR, HIKH…DFLQ, HVTQ…IFNN, FLKA…PVPN, YLSY…VCES, KLEV…LFCN, SLRK…LERT, SVEV…LLMK, SLRF…TLSE, ILQE…PLLT, HLKI…KMAK, ELEE…IMNC, RMHT…MQLP, EIKC…ENLP, and KLQE…TLEL. The segment at 1076-1205 is interaction with NHERF1; that stretch reads PTTIMNCRRM…NNFCDNREAL (130 aa). A PPM-type phosphatase domain is found at 1175 to 1422; it reads SHGYTEASGV…DSISAVVVQL (248 aa). The Mn(2+) site is built by aspartate 1210, glycine 1211, lysine 1374, and aspartate 1413. Disordered stretches follow at residues 1458–1510 and 1673–1717; these read DRPS…SPAY and EVKE…DTPL. Low complexity predominate over residues 1468 to 1489; sequence SSSSGMASEISSELSTSEMSSE. A PDZ-binding; required for interaction with NHERF1 motif is present at residues 1715 to 1717; sequence TPL.

In terms of assembly, interacts with the nucleotide free form of K-Ras (KRAS) via its LRR repeats. Interacts with AKT2, AKT3, PRKCB isoform beta-II, STK4, RPS6KB1, RAF1. Isoform 1 (predominantly) and isoform 2 interact with BRAP. Interacts with FKBP5; FKBP5 acts as a scaffold for PHLPP1 and Akt. Interacts with SCRIB; SCRIB acts as a scaffold for PHLPP1 and Akt. Interacts with NHERF1; NHERF1 scaffolds a heterotrimeric complex with PTEN at the plasma membrane. Interacts with WDR48 and USP12. Mn(2+) serves as cofactor. In terms of tissue distribution, in colorectal cancer tissue, expression is highest in the surface epithelium of normal colonic mucosa adjacent to the cancer tissue but is largely excluded from the crypt bases. Expression is lost or significantly decreased in 78% of tested tumors (at protein level). Ubiquitously expressed in non-cancerous tissues.

It localises to the cytoplasm. The protein resides in the membrane. Its subcellular location is the nucleus. The protein localises to the cell membrane. It catalyses the reaction O-phospho-L-seryl-[protein] + H2O = L-seryl-[protein] + phosphate. It carries out the reaction O-phospho-L-threonyl-[protein] + H2O = L-threonyl-[protein] + phosphate. Its activity is regulated as follows. Insensitive to okadaic acid. Deubiquitination by WDR48-USP12 complex positively regulates PHLPP1 stability. In terms of biological role, protein phosphatase involved in regulation of Akt and PKC signaling. Mediates dephosphorylation in the C-terminal domain hydrophobic motif of members of the AGC Ser/Thr protein kinase family; specifically acts on 'Ser-473' of AKT2 and AKT3, 'Ser-660' of PRKCB and 'Ser-657' of PRKCA. Isoform 2 seems to have a major role in regulating Akt signaling in hippocampal neurons. Akt regulates the balance between cell survival and apoptosis through a cascade that primarily alters the function of transcription factors that regulate pro- and antiapoptotic genes. Dephosphorylation of 'Ser-473' of Akt triggers apoptosis and suppression of tumor growth. Dephosphorylation of PRKCA and PRKCB leads to their destabilization and degradation. Dephosphorylates STK4 on 'Thr-387' leading to STK4 activation and apoptosis. Dephosphorylates RPS6KB1 and is involved in regulation of cap-dependent translation. Inhibits cancer cell proliferation and may act as a tumor suppressor. Dephosphorylates RAF1 inhibiting its kinase activity. May act as a negative regulator of K-Ras signaling in membrane rafts. Involved in the hippocampus-dependent long-term memory formation. Involved in circadian control by regulating the consolidation of circadian periodicity after resetting. Involved in development and function of regulatory T-cells. This Homo sapiens (Human) protein is PH domain leucine-rich repeat-containing protein phosphatase 1 (PHLPP1).